Here is a 1306-residue protein sequence, read N- to C-terminus: Activating transcription factor 7-interacting protein 1 (1306 aa).

Methionine 1 is subject to N-acetylmethionine. The tract at residues 1–23 (MDSVEEPQKKVFKARKTMRASDR) is disordered. Residue lysine 33 forms a Glycyl lysine isopeptide (Lys-Gly) (interchain with G-Cter in SUMO2) linkage. A phosphoserine mark is found at serine 57 and serine 112. 7 disordered regions span residues 104–470 (EDLN…SMET), 496–604 (LPVE…SKRR), 689–722 (AAKDDLKKRQESPPNPPISPGKPANDTNSNNNMT), 765–785 (VVSSQPKLQTSATSGSLPAAP), 871–895 (PLPNPTKPNIPSVPSPSSIQRNSST), 920–1060 (RTSL…GPSQ), and 1152–1196 (AGPQ…STSL). Polar residues-rich tracts occupy residues 109–134 (EALSPSITCDLSSRVTTEPGSGSPAS) and 143–162 (VSDNPASDNPASDNPASDNP). Threonine 124 is subject to Phosphothreonine. Low complexity-rich tracts occupy residues 185–212 (EEPPSSDPSSSDPTSSEPSSSEPTCSEP), 246–261 (EAASSEPATSEPASDE), and 284–303 (PSGDSQSDEPPSSEDSLPRS). The span at 432–441 (QSEKDEHKSP) shows a compositional bias: basic and acidic residues. A phosphoserine mark is found at serine 511, serine 514, serine 516, and serine 533. Polar residues predominate over residues 513 to 523 (GSPSKQESSEN). 3 stretches are compositionally biased toward basic and acidic residues: residues 557–566 (EGEKSEKDGK), 592–601 (KSEDMDSVES), and 689–699 (AAKDDLKKRQE). Positions 587–605 (RRKRSKSEDMDSVESKRRR) match the Nuclear localization signal motif. Lysine 592 is covalently cross-linked (Glycyl lysine isopeptide (Lys-Gly) (interchain with G-Cter in SUMO2)). Position 593 is a phosphoserine (serine 593). An interaction with SETDB1 region spans residues 596–851 (MDSVESKRRR…NQPSGNVEFI (256 aa)). Positions 666–696 (NKRHKAVLTELQAKIARLTKRFGAAKDDLKK) form a coiled coil. Residues serine 700 and serine 707 each carry the phosphoserine modification. Residues 713 to 722 (NDTNSNNNMT) are compositionally biased toward polar residues. Residues 871–884 (PLPNPTKPNIPSVP) show a composition bias toward pro residues. Serine 933 carries the phosphoserine modification. Glycyl lysine isopeptide (Lys-Gly) (interchain with G-Cter in SUMO2) cross-links involve residues lysine 944 and lysine 974. Polar residues predominate over residues 948 to 981 (STFSPPSSAEQNSSATPRIVTENQTNKTVDSSIN). The segment covering 987-1000 (STSQSGKASSSDSS) has biased composition (low complexity). Residues 1001–1011 (GVIDLTMDDEE) are interaction with SUMO. The span at 1022–1040 (SPPSSSTVSTSQPMSRPLQ) shows a compositional bias: low complexity. Residues 1054–1143 (PTSGPSQATI…RVPQTTTYVV (90 aa)) form the Fibronectin type-III 1 domain. Residues 1170 to 1187 (PRPLHPAPLPEAPQPQRL) are compositionally biased toward pro residues. The interval 1190-1306 (EAASTSLPQK…TDVISSSQNS (117 aa)) is interaction with MBD1. Positions 1196-1302 (LPQKPHLKLA…DPQSTDVISS (107 aa)) constitute a Fibronectin type-III 2 domain.

The protein belongs to the MCAF family. As to quaternary structure, interacts with MBD1; the interaction is enhanced when MBD1 is sumoylated. Interacts with SETDB1; the interaction protects SETDB1 from proteasomal degradation and is required to stimulate histone methyltransferase activity and facilitate the conversion of dimethylated to trimethylated H3 'Lys-9'. Interacts with SUMO ubiquitin-like proteins (SUMO1, SUNO2 and SUMO3), with a preference for SUMO2 and SUMO3. Interacts with SP1, ATF7 and ZHX1. Interacts with the general transcription machinery, including ERCC2, ERCC3, GTF2E1, GTF2E2 and POLR2A. In terms of tissue distribution, ubiquitously expressed at all stages studied.

The protein localises to the nucleus. Recruiter that couples transcriptional factors to general transcription apparatus and thereby modulates transcription regulation and chromatin formation. Can both act as an activator or a repressor depending on the context. Required for HUSH-mediated heterochromatin formation and gene silencing. Mediates MBD1-dependent transcriptional repression, probably by recruiting complexes containing SETDB1. Stabilizes SETDB1, is required to stimulate histone methyltransferase activity of SETDB1 and facilitates the conversion of dimethylated to trimethylated H3 'Lys-9' (H3K9me3). The complex formed with MBD1 and SETDB1 represses transcription and couples DNA methylation and histone H3 'Lys-9' trimethylation (H3K9me3). Facilitates telomerase TERT and TERC gene expression by SP1 in cancer cells. This Mus musculus (Mouse) protein is Activating transcription factor 7-interacting protein 1 (Atf7ip).